A 600-amino-acid polypeptide reads, in one-letter code: Proline dehydrogenase 1, mitochondrial (600 aa).

A disordered region spans residues 155-177; that stretch reads AEHKEMESCTSAAERDGSGTNKR. N6-acetyllysine occurs at positions 368 and 486.

The protein belongs to the proline oxidase family. FAD serves as cofactor. In terms of tissue distribution, expressed in lung, skeletal muscle and brain, to a lesser extent in heart and kidney, and weakly in liver, placenta and pancreas.

The protein localises to the mitochondrion matrix. The enzyme catalyses L-proline + a quinone = (S)-1-pyrroline-5-carboxylate + a quinol + H(+). The protein operates within amino-acid degradation; L-proline degradation into L-glutamate; L-glutamate from L-proline: step 1/2. Converts proline to delta-1-pyrroline-5-carboxylate. This Homo sapiens (Human) protein is Proline dehydrogenase 1, mitochondrial.